The following is a 446-amino-acid chain: MNSQHIYDIVGIGVGPFNLGLACLTQPLNELSTIFFDSKDEFDWHSGIMPEGSTLQIPFIADLVSFADPKNNYSFLNYLKLHNRLYQFFIRESFFILRAEYNLYCKWAAEQLENVHFKSFVERIDYDESRQLYTVRVKQPQGEMKVVTKNLVLGTGTTPITPKFCQGYPEQIQSSADYLRHKKDYLTKKSITIVGGGQSGAEIYYDLLSEIDQHGYQLNWLTKAPHFFSMDLGKLTLEYTSPDYTSHFYSLDEDKRDQVIGSQNALYKGIELSFVNRIYDLLYQKSLHQPIPTRMMPNCALDAVEQQSNHLNLTFKNSDINKRFKLESEVLILALGYEYKIPECLTPIRTLINWDSKGRIALNWNYSINDDNTIFAQNIGIYSHGFTVPDLGMGCYRNAIIINTILGREVYPVEKRIAYQEFAPTTEEIVTPVKTTAKSHSTELSF.

Positions 17, 37, 38, 39, 44, and 45 each coordinate FAD. Positions 54, 56, and 98 each coordinate NADP(+). Gln56 serves as a coordination point for FAD. Val121 lines the FAD pocket. Residues Ser199, Lys223, Tyr267, and Leu301 each contribute to the NADP(+) site. 3 residues coordinate FAD: Asn378, Pro389, and Leu391.

This sequence belongs to the lysine N(6)-hydroxylase/L-ornithine N(5)-oxygenase family. As to quaternary structure, homotetramer. Requires FAD as cofactor.

It catalyses the reaction putrescine + NADPH + O2 = N-hydroxyputrescine + NADP(+) + H2O. The protein operates within siderophore biosynthesis. In terms of biological role, N-hydroxylating monooxygenase involved in the biosynthesis of fimsbactin A, the major siderophore produced by A.baumannii. Catalyzes the N-hydroxylation of the aliphatic diamine putrescine into N-hydroxyputrescine (NHP). Putrescine is the preferred substrate, but the enzyme can also catalyze the N-hydroxylation of cadaverine, with 4-fold lower catalytic efficiency. Cannot use lysine or ornithine as substrates. Uses both NADPH and NADH as the reducing cofactor with a preference for NADPH. The sequence is that of Putrescine N-hydroxylase from Acinetobacter baumannii (strain ATCC 17978 / DSM 105126 / CIP 53.77 / LMG 1025 / NCDC KC755 / 5377).